The chain runs to 273 residues: MAIVKCKPTSAGRRHVVKIVNPELHKGKPYAPLLGIKSKTGGRNNLGRITTRHIGGGHKQHYRVIDFKRNKLDIPAVVERLEYDPNRSANIALVLYKDGERRYILAPKGLSAGDQIQSGINAPIKIGNSLPMRNIPVGSTVHNVELKPGKGGQIARSAGAYVQIIAREGNYVTLRLRSGEMRKVLSECVATIGEVGNSEHMLRVLGKAGANRWRGVRPTVRGTAMNPVDHPHGGGEGRNFGKHPVTPWGVQTKGKKTRHNKRTDKYIVRRRGK.

The segment at 221–263 (RGTAMNPVDHPHGGGEGRNFGKHPVTPWGVQTKGKKTRHNKRT) is disordered. The span at 253-263 (KGKKTRHNKRT) shows a compositional bias: basic residues.

Belongs to the universal ribosomal protein uL2 family. Part of the 50S ribosomal subunit. Forms a bridge to the 30S subunit in the 70S ribosome.

In terms of biological role, one of the primary rRNA binding proteins. Required for association of the 30S and 50S subunits to form the 70S ribosome, for tRNA binding and peptide bond formation. It has been suggested to have peptidyltransferase activity; this is somewhat controversial. Makes several contacts with the 16S rRNA in the 70S ribosome. The sequence is that of Large ribosomal subunit protein uL2 from Histophilus somni (strain 129Pt) (Haemophilus somnus).